Reading from the N-terminus, the 20-residue chain is DELTA-actitoxin-Afr1b (20 aa).

This sequence belongs to the actinoporin family. Sea anemone subfamily. Octamer or nonamer in membranes. Monomer in the soluble state.

Its subcellular location is the secreted. The protein resides in the nematocyst. It is found in the target cell membrane. In terms of biological role, pore-forming toxin (PFT) that consists of a crown-shaped octamer or nonamer that forms cation-selective hydrophilic pores of about 1.5 nm (inside) and 13 nm (outside) and causes cytolysis. It causes cardiac stimulation. Also causes hemolysis (HC(50)=0.4 nM). Interestingly, the Phe-16 is crucial for hemolysis. Pore formation is a multi-step process that involves specific recognition of membrane sphingomyelin (but neither cholesterol nor phosphatidylcholine) using aromatic rich region and adjacent phosphocholine (POC) binding site, firm binding to the membrane (mainly driven by hydrophobic interactions) accompanied by the transfer of the N-terminal region to the lipid-water interface and finally pore formation after oligomerization of monomers. It is probable that a dimeric form is an assembly intermediate before the complete oligomerization. The formation of stable pores occurs only in vesicles composed of DOPC/SM (there is no oligomerization when the PFT is treated with vesicles of DOPC or SM alone). The transmembrane pore displays 8 lateral perforations, one at each subunit-subunit interface, partially occupied by the acyl-chain region of a bridging lipid. Each pore contains 24 lipid molecules, firmly bound to each subunit, that is, 3 lipids (L1, L2, L3, L4 and/or L5) are associated to each subunit. Lipid L1 bridges 2 subunits, whereas lipids L2 and L3 bind to sites at single subunit. The sequence is that of DELTA-actitoxin-Afr1b from Actinia fragacea (Strawberry anemone).